Reading from the N-terminus, the 161-residue chain is SsrA-binding protein (161 aa).

Belongs to the SmpB family.

Its subcellular location is the cytoplasm. Required for rescue of stalled ribosomes mediated by trans-translation. Binds to transfer-messenger RNA (tmRNA), required for stable association of tmRNA with ribosomes. tmRNA and SmpB together mimic tRNA shape, replacing the anticodon stem-loop with SmpB. tmRNA is encoded by the ssrA gene; the 2 termini fold to resemble tRNA(Ala) and it encodes a 'tag peptide', a short internal open reading frame. During trans-translation Ala-aminoacylated tmRNA acts like a tRNA, entering the A-site of stalled ribosomes, displacing the stalled mRNA. The ribosome then switches to translate the ORF on the tmRNA; the nascent peptide is terminated with the 'tag peptide' encoded by the tmRNA and targeted for degradation. The ribosome is freed to recommence translation, which seems to be the essential function of trans-translation. The polypeptide is SsrA-binding protein (Vibrio campbellii (strain ATCC BAA-1116)).